The primary structure comprises 185 residues: Pyridoxal 5'-phosphate synthase subunit PdxT (185 aa).

46-48 (GES) contributes to the L-glutamine binding site. C78 (nucleophile) is an active-site residue. L-glutamine contacts are provided by residues R106 and 132–133 (IR). Residues H168 and E170 each act as charge relay system in the active site.

Belongs to the glutaminase PdxT/SNO family. In terms of assembly, in the presence of PdxS, forms a dodecamer of heterodimers. Only shows activity in the heterodimer.

The enzyme catalyses aldehydo-D-ribose 5-phosphate + D-glyceraldehyde 3-phosphate + L-glutamine = pyridoxal 5'-phosphate + L-glutamate + phosphate + 3 H2O + H(+). It catalyses the reaction L-glutamine + H2O = L-glutamate + NH4(+). The protein operates within cofactor biosynthesis; pyridoxal 5'-phosphate biosynthesis. Its function is as follows. Catalyzes the hydrolysis of glutamine to glutamate and ammonia as part of the biosynthesis of pyridoxal 5'-phosphate. The resulting ammonia molecule is channeled to the active site of PdxS. The sequence is that of Pyridoxal 5'-phosphate synthase subunit PdxT from Corynebacterium diphtheriae (strain ATCC 700971 / NCTC 13129 / Biotype gravis).